The sequence spans 201 residues: Akirin (201 aa).

Residues 1–133 (MACATLKRAL…PRRPDSPQNL (133 aa)) form a disordered region. The Nuclear localization signal motif lies at 20 to 25 (PKRRRC). Phosphoserine occurs at positions 39 and 41. Composition is skewed to polar residues over residues 44-57 (GPSTSAGLPHTPSN) and 65-75 (EPSPFSESSLA). Phosphoserine is present on Ser67. Over residues 112–122 (SESSGSEMGPE) the composition is skewed to low complexity. Ser123 and Ser129 each carry phosphoserine.

Belongs to the akirin family. In terms of assembly, interacts with dmap1. Interacts with bap60 and rel; interaction is immune stimulation-dependent; activates selected rel target gene promoters. Interacts with bap55; interaction is immune stimulation-dependent. Interacts with twi. In terms of processing, polyubiquitinated via 'Lys-63'-linked ubiquitin by Hyd, promoting interaction with rel. In terms of tissue distribution, ubiquitous.

The protein localises to the nucleus. Functionally, molecular adapter that acts as a bridge between a variety of multiprotein complexes, and which is required for embryonic development and for normal innate immune response. Acts as a regulator of embryonic myogenesis by bridging Twist (twi) with the SWI/SNF-like Brahma complex, promoting expression of twi-regulated genes during myogenesis. Effector of immune deficiency pathway (Imd) by acting either downstream of, or at the level of, the NF-kappa-B factor Relish (Rel). Acts by bridging the NF-kappa-B factor Rel and the Brahma complex through bap60 interaction, leading to activation a subset of NF-kappa-B factor Relish (Rel) effector genes. Not part of the Toll pathway. Required for the formation of the heart by promoting expression ot tinman (tin). This is Akirin from Drosophila melanogaster (Fruit fly).